Here is a 335-residue protein sequence, read N- to C-terminus: UPF0353 protein MMAR_2288 (335 aa).

Transmembrane regions (helical) follow at residues 18–38 (WFFLFIFVIAGLIAVYVVLQL) and 67–87 (IPAMLLALSLVLFTVAMAGPT). Residues 98–294 (VVMLVIDVSQ…AELNSVYASL (197 aa)) form the VWFA domain. A helical transmembrane segment spans residues 309–329 (MGWLRLGALVLVAAALAALLI).

Belongs to the UPF0353 family.

Its subcellular location is the cell membrane. This is UPF0353 protein MMAR_2288 from Mycobacterium marinum (strain ATCC BAA-535 / M).